The following is a 452-amino-acid chain: uncharacterized protein (452 aa).

The protein localises to the cytoplasm. It is found in the nucleus. This is an uncharacterized protein from Schizosaccharomyces pombe (strain 972 / ATCC 24843) (Fission yeast).